A 236-amino-acid polypeptide reads, in one-letter code: 2-C-methyl-D-erythritol 4-phosphate cytidylyltransferase (236 aa).

The protein belongs to the IspD/TarI cytidylyltransferase family. IspD subfamily. In terms of assembly, homodimer.

It catalyses the reaction 2-C-methyl-D-erythritol 4-phosphate + CTP + H(+) = 4-CDP-2-C-methyl-D-erythritol + diphosphate. It participates in isoprenoid biosynthesis; isopentenyl diphosphate biosynthesis via DXP pathway; isopentenyl diphosphate from 1-deoxy-D-xylulose 5-phosphate: step 2/6. Functionally, catalyzes the formation of 4-diphosphocytidyl-2-C-methyl-D-erythritol from CTP and 2-C-methyl-D-erythritol 4-phosphate (MEP). The protein is 2-C-methyl-D-erythritol 4-phosphate cytidylyltransferase of Enterobacter sp. (strain 638).